A 371-amino-acid chain; its full sequence is Aurora kinase (371 aa).

Polar residues-rich tracts occupy residues methionine 1–leucine 15 and arginine 48–aspartate 80. A disordered region spans residues methionine 1–proline 84. Residues phenylalanine 99–isoleucine 350 form the Protein kinase domain. Residues leucine 105 to valine 113 and lysine 128 contribute to the ATP site. Catalysis depends on aspartate 222, which acts as the Proton acceptor.

Belongs to the protein kinase superfamily. Ser/Thr protein kinase family. Aurora subfamily.

It localises to the nucleus. It is found in the cytoplasm. The protein localises to the cytoskeleton. Its subcellular location is the spindle. The protein resides in the chromosome. It localises to the centromere. It is found in the kinetochore. It catalyses the reaction L-seryl-[protein] + ATP = O-phospho-L-seryl-[protein] + ADP + H(+). The enzyme catalyses L-threonyl-[protein] + ATP = O-phospho-L-threonyl-[protein] + ADP + H(+). Its function is as follows. Component of the chromosomal passenger complex (CPC), a complex that acts as a key regulator of chromosome segregation and cytokinesis. Has a role in error-correction of aberrent kinetochore-microtubule attachments to ensure that sister kinetochores become bioriented and connect to opposite poles by promoting spindle assembly checkpoint signaling. This is Aurora kinase (IPL1) from Yarrowia lipolytica (strain CLIB 122 / E 150) (Yeast).